The sequence spans 279 residues: 4-hydroxy-3-methylbut-2-enyl diphosphate reductase (279 aa).

Position 12 (C12) interacts with [4Fe-4S] cluster. 2 residues coordinate (2E)-4-hydroxy-3-methylbut-2-enyl diphosphate: H40 and H72. The dimethylallyl diphosphate site is built by H40 and H72. Isopentenyl diphosphate is bound by residues H40 and H72. [4Fe-4S] cluster is bound at residue C94. H122 is a binding site for (2E)-4-hydroxy-3-methylbut-2-enyl diphosphate. Position 122 (H122) interacts with dimethylallyl diphosphate. Residue H122 participates in isopentenyl diphosphate binding. E124 functions as the Proton donor in the catalytic mechanism. T161 serves as a coordination point for (2E)-4-hydroxy-3-methylbut-2-enyl diphosphate. C189 serves as a coordination point for [4Fe-4S] cluster. Residues S217, N219, and S261 each coordinate (2E)-4-hydroxy-3-methylbut-2-enyl diphosphate. Residues S217, N219, and S261 each contribute to the dimethylallyl diphosphate site. Positions 217, 219, and 261 each coordinate isopentenyl diphosphate.

Belongs to the IspH family. [4Fe-4S] cluster serves as cofactor.

It catalyses the reaction isopentenyl diphosphate + 2 oxidized [2Fe-2S]-[ferredoxin] + H2O = (2E)-4-hydroxy-3-methylbut-2-enyl diphosphate + 2 reduced [2Fe-2S]-[ferredoxin] + 2 H(+). It carries out the reaction dimethylallyl diphosphate + 2 oxidized [2Fe-2S]-[ferredoxin] + H2O = (2E)-4-hydroxy-3-methylbut-2-enyl diphosphate + 2 reduced [2Fe-2S]-[ferredoxin] + 2 H(+). Its pathway is isoprenoid biosynthesis; dimethylallyl diphosphate biosynthesis; dimethylallyl diphosphate from (2E)-4-hydroxy-3-methylbutenyl diphosphate: step 1/1. It participates in isoprenoid biosynthesis; isopentenyl diphosphate biosynthesis via DXP pathway; isopentenyl diphosphate from 1-deoxy-D-xylulose 5-phosphate: step 6/6. Catalyzes the conversion of 1-hydroxy-2-methyl-2-(E)-butenyl 4-diphosphate (HMBPP) into a mixture of isopentenyl diphosphate (IPP) and dimethylallyl diphosphate (DMAPP). Acts in the terminal step of the DOXP/MEP pathway for isoprenoid precursor biosynthesis. This chain is 4-hydroxy-3-methylbut-2-enyl diphosphate reductase, found in Syntrophotalea carbinolica (strain DSM 2380 / NBRC 103641 / GraBd1) (Pelobacter carbinolicus).